A 240-amino-acid polypeptide reads, in one-letter code: Fatty acid metabolism regulator protein (240 aa).

Residues 6 to 74 (KGPASFAEKY…HGKPTRVNNF (69 aa)) enclose the HTH gntR-type domain. Positions 34 to 53 (ERELSELIGVTRTTLREVLQ) form a DNA-binding region, H-T-H motif.

Homodimer.

The protein localises to the cytoplasm. Functionally, multifunctional regulator of fatty acid metabolism. This is Fatty acid metabolism regulator protein from Shewanella oneidensis (strain ATCC 700550 / JCM 31522 / CIP 106686 / LMG 19005 / NCIMB 14063 / MR-1).